We begin with the raw amino-acid sequence, 196 residues long: dITP/XTP pyrophosphatase (196 aa).

10-15 contacts substrate; it reads SGNKGK. Residues glutamate 40 and aspartate 69 each contribute to the Mg(2+) site. Catalysis depends on aspartate 69, which acts as the Proton acceptor. Substrate contacts are provided by residues serine 70, 147–150, lysine 170, and 175–176; these read FGYD and HR.

The protein belongs to the HAM1 NTPase family. In terms of assembly, homodimer. Mg(2+) is required as a cofactor.

The enzyme catalyses XTP + H2O = XMP + diphosphate + H(+). It carries out the reaction dITP + H2O = dIMP + diphosphate + H(+). The catalysed reaction is ITP + H2O = IMP + diphosphate + H(+). Pyrophosphatase that catalyzes the hydrolysis of nucleoside triphosphates to their monophosphate derivatives, with a high preference for the non-canonical purine nucleotides XTP (xanthosine triphosphate), dITP (deoxyinosine triphosphate) and ITP. Seems to function as a house-cleaning enzyme that removes non-canonical purine nucleotides from the nucleotide pool, thus preventing their incorporation into DNA/RNA and avoiding chromosomal lesions. This Prochlorococcus marinus (strain NATL1A) protein is dITP/XTP pyrophosphatase.